Reading from the N-terminus, the 494-residue chain is Glucose-6-phosphate exchanger SLC37A2 (494 aa).

A helical transmembrane segment spans residues 20–37; sequence YRFSILFLTFVFYTSYHL. Residues asparagine 52, asparagine 63, and asparagine 67 are each glycosylated (N-linked (GlcNAc...) asparagine). A run of 11 helical transmembrane segments spans residues 85–105, 116–136, 146–166, 187–207, 208–228, 295–315, 327–347, 355–375, 384–404, 427–447, and 455–475; these read FGVL…FSGI, LSTG…GFYW, LVQA…VACV, SVGN…AWGL, SFIV…LFLV, LCLL…PLYI, GDLS…AGLV, ASTC…YNKI, VGML…ITTA, AIID…AGLI, and VFYM…RLVY.

It belongs to the major facilitator superfamily. Organophosphate:Pi antiporter (OPA) (TC 2.A.1.4) family.

It is found in the endoplasmic reticulum membrane. It carries out the reaction D-glucose 6-phosphate(in) + phosphate(out) = D-glucose 6-phosphate(out) + phosphate(in). In terms of biological role, inorganic phosphate and glucose-6-phosphate antiporter. May transport cytoplasmic glucose-6-phosphate into the lumen of the endoplasmic reticulum and translocate inorganic phosphate into the opposite direction. In Danio rerio (Zebrafish), this protein is Glucose-6-phosphate exchanger SLC37A2.